Reading from the N-terminus, the 637-residue chain is Protein arginine N-methyltransferase 5 (637 aa).

Alanine 2 bears the N-acetylalanine mark. The segment at 13 to 292 is TIM barrel; sequence RVSSGRDLNC…YLEYLSQNRP (280 aa). The 308-residue stretch at 308-615 folds into the SAM-dependent MTase PRMT-type domain; it reads LQSPLQPLMD…SNSKKVWYEW (308 aa). Tyrosine 324 serves as a coordination point for S-adenosyl-L-methionine. A protein is bound at residue phenylalanine 327. S-adenosyl-L-methionine-binding positions include 333–334, glutamate 392, and 419–420; these read KY and DM. A protein-binding residues include glutamate 435 and glutamate 444. Residues glutamate 435 and glutamate 444 each act as proton donor/acceptor in the active site. Residues 465–637 form a beta barrel region; the sequence is PGEYTSFLAP…PTGRSYTIGL (173 aa). The interval 488 to 494 is dimerization; sequence REKDRDP.

The protein belongs to the class I-like SAM-binding methyltransferase superfamily. Protein arginine N-methyltransferase family. As to quaternary structure, forms, at least, homodimers and homotetramers. Component of the methylosome complex, composed of PRMT5, WDR77 and CLNS1A. Found in a complex composed of PRMT5, WDR77 and RIOK1. RIOK1 and CLNS1A associate with PRMT5 in a mutually exclusive fashion, which allows the recruitment of distinct methylation substrates, such as nucleolin/NCL and Sm proteins, respectively. Interacts with PRDM1. Identified in a complex composed of methylosome and PRMT1 and ERH. Interacts with EGFR; methylates EGFR and stimulates EGFR-mediated ERK activation. Interacts with HOXA9. Interacts with SRGAP2. Found in a complex with COPRS, RUNX1 and CBFB. Interacts with CHTOP; the interaction symmetrically methylates CHTOP, but seems to require the presence of PRMT1. Interacts with EPB41L3; this modulates methylation of target proteins. Component of a high molecular weight E2F-pocket protein complex, CERC (cyclin E1 repressor complex). Associates with SWI/SNF remodeling complexes containing SMARCA2 and SMARCA4. Interacts with JAK2, SSTR1, SUPT5H, BRAF and with active RAF1. Interacts with LSM11, PRMT7 and SNRPD3. Interacts with COPRS; promoting its recruitment on histone H4. Interacts with CLNS1A/pICln. Identified in a complex with CLNS1A/pICln and Sm proteins. Interacts with RPS10. Interacts with WDR77. Interacts with IWS1. Interacts with CRY1. Interacts with POLR2A. Interacts with SMN1/SMN2. Interacts with LYAR; this interaction is direct. Interacts with TTC5/STRAP; this interaction is DNA damage-dependent and promotes PRMT5 interaction with p53/TP53. Interacts with p53/TP53 in response to DNA damage; the interaction is TTC5/STRAP dependent. Interacts with FAM47E; the interaction is direct, promotes PRMT5 localization to chromatin, and does not disrupt its association with WDR77 or STUB1. Interacts with TDRD6. Interacts with STUB1. Interacts with MBD2. Does not interact with MBD3.

It is found in the cytoplasm. Its subcellular location is the nucleus. The protein localises to the golgi apparatus. The enzyme catalyses L-arginyl-[protein] + 2 S-adenosyl-L-methionine = N(omega),N(omega)'-dimethyl-L-arginyl-[protein] + 2 S-adenosyl-L-homocysteine + 2 H(+). Its activity is regulated as follows. Activity is increased by EGF, HGF, FGF1 or FGF2 treatments, and slightly decreased by NGF treatment. Arginine methyltransferase that can both catalyze the formation of omega-N monomethylarginine (MMA) and symmetrical dimethylarginine (sDMA), with a preference for the formation of MMA. Specifically mediates the symmetrical dimethylation of arginine residues in the small nuclear ribonucleoproteins Sm D1 (SNRPD1) and Sm D3 (SNRPD3); such methylation being required for the assembly and biogenesis of snRNP core particles. Methylates SUPT5H and may regulate its transcriptional elongation properties. May methylate the N-terminal region of MBD2. Mono- and dimethylates arginine residues of myelin basic protein (MBP) in vitro. May play a role in cytokine-activated transduction pathways. Negatively regulates cyclin E1 promoter activity and cellular proliferation. Methylates histone H2A and H4 'Arg-3' during germ cell development. Methylates histone H3 'Arg-8', which may repress transcription. Methylates the Piwi proteins (PIWIL1, PIWIL2 and PIWIL4), methylation of Piwi proteins being required for the interaction with Tudor domain-containing proteins and subsequent localization to the meiotic nuage. Methylates RPS10. Attenuates EGF signaling through the MAPK1/MAPK3 pathway acting at 2 levels. First, monomethylates EGFR; this enhances EGFR 'Tyr-1197' phosphorylation and PTPN6 recruitment, eventually leading to reduced SOS1 phosphorylation. Second, methylates RAF1 and probably BRAF, hence destabilizing these 2 signaling proteins and reducing their catalytic activity. Required for induction of E-selectin and VCAM-1, on the endothelial cells surface at sites of inflammation. Methylates HOXA9. Methylates and regulates SRGAP2 which is involved in cell migration and differentiation. Acts as a transcriptional corepressor in CRY1-mediated repression of the core circadian component PER1 by regulating the H4R3 dimethylation at the PER1 promoter. Methylates GM130/GOLGA2, regulating Golgi ribbon formation. Methylates H4R3 in genes involved in glioblastomagenesis in a CHTOP- and/or TET1-dependent manner. Symmetrically methylates POLR2A, a modification that allows the recruitment to POLR2A of proteins including SMN1/SMN2 and SETX. This is required for resolving RNA-DNA hybrids created by RNA polymerase II, that form R-loop in transcription terminal regions, an important step in proper transcription termination. Along with LYAR, binds the promoter of gamma-globin HBG1/HBG2 and represses its expression. Symmetrically methylates NCL. Methylates p53/TP53; methylation might possibly affect p53/TP53 target gene specificity. Involved in spliceosome maturation and mRNA splicing in prophase I spermatocytes through the catalysis of the symmetrical arginine dimethylation of SNRPB (small nuclear ribonucleoprotein-associated protein) and the interaction with tudor domain-containing protein TDRD6. In Bos taurus (Bovine), this protein is Protein arginine N-methyltransferase 5 (PRMT5).